The chain runs to 411 residues: UPF0761 membrane protein PSPA7_4558 (411 aa).

6 consecutive transmembrane segments (helical) span residues 36 to 56, 92 to 112, 132 to 152, 174 to 194, 207 to 229, and 244 to 264; these read LFAV…IPAF, HLTW…LVTI, FLLY…GFAV, LLGL…YSAV, GGMF…VSLF, and IFLL…VLVC.

The protein belongs to the UPF0761 family.

It is found in the cell inner membrane. This chain is UPF0761 membrane protein PSPA7_4558, found in Pseudomonas paraeruginosa (strain DSM 24068 / PA7) (Pseudomonas aeruginosa (strain PA7)).